Reading from the N-terminus, the 335-residue chain is N-acetyl-gamma-glutamyl-phosphate reductase (335 aa).

The active site involves Cys-147.

It belongs to the NAGSA dehydrogenase family. Type 1 subfamily.

Its subcellular location is the cytoplasm. The enzyme catalyses N-acetyl-L-glutamate 5-semialdehyde + phosphate + NADP(+) = N-acetyl-L-glutamyl 5-phosphate + NADPH + H(+). It functions in the pathway amino-acid biosynthesis; L-arginine biosynthesis; N(2)-acetyl-L-ornithine from L-glutamate: step 3/4. Its function is as follows. Catalyzes the NADPH-dependent reduction of N-acetyl-5-glutamyl phosphate to yield N-acetyl-L-glutamate 5-semialdehyde. The sequence is that of N-acetyl-gamma-glutamyl-phosphate reductase from Sulfurovum sp. (strain NBC37-1).